The following is a 363-amino-acid chain: Dihydroorotate dehydrogenase (quinone) (363 aa).

FMN is bound by residues 62–66 (AGFDK) and threonine 86. Lysine 66 is a substrate binding site. 111–115 (NRMGF) contacts substrate. FMN is bound by residues asparagine 142 and asparagine 175. Asparagine 175 contributes to the substrate binding site. Serine 178 (nucleophile) is an active-site residue. Asparagine 180 is a binding site for substrate. Positions 216 and 244 each coordinate FMN. Position 245–246 (245–246 (NT)) interacts with substrate. FMN is bound by residues glycine 267, glycine 296, and 317 to 318 (YT).

This sequence belongs to the dihydroorotate dehydrogenase family. Type 2 subfamily. Monomer. It depends on FMN as a cofactor.

The protein localises to the cell membrane. It catalyses the reaction (S)-dihydroorotate + a quinone = orotate + a quinol. Its pathway is pyrimidine metabolism; UMP biosynthesis via de novo pathway; orotate from (S)-dihydroorotate (quinone route): step 1/1. Catalyzes the conversion of dihydroorotate to orotate with quinone as electron acceptor. The polypeptide is Dihydroorotate dehydrogenase (quinone) (Anaeromyxobacter sp. (strain Fw109-5)).